Reading from the N-terminus, the 90-residue chain is Large ribosomal subunit protein bL27 (90 aa).

The segment at 1-21 (MAHKKAGGSSRNGRDSHGKRL) is disordered.

It belongs to the bacterial ribosomal protein bL27 family.

The chain is Large ribosomal subunit protein bL27 from Nitrobacter winogradskyi (strain ATCC 25391 / DSM 10237 / CIP 104748 / NCIMB 11846 / Nb-255).